The chain runs to 429 residues: Glutamate-1-semialdehyde 2,1-aminomutase (429 aa).

At lysine 265 the chain carries N6-(pyridoxal phosphate)lysine.

Belongs to the class-III pyridoxal-phosphate-dependent aminotransferase family. HemL subfamily. As to quaternary structure, homodimer. Pyridoxal 5'-phosphate is required as a cofactor.

Its subcellular location is the cytoplasm. It catalyses the reaction (S)-4-amino-5-oxopentanoate = 5-aminolevulinate. It participates in porphyrin-containing compound metabolism; protoporphyrin-IX biosynthesis; 5-aminolevulinate from L-glutamyl-tRNA(Glu): step 2/2. This chain is Glutamate-1-semialdehyde 2,1-aminomutase, found in Azotobacter vinelandii (strain DJ / ATCC BAA-1303).